A 129-amino-acid chain; its full sequence is Small ribosomal subunit protein uS11 (129 aa).

This sequence belongs to the universal ribosomal protein uS11 family. Part of the 30S ribosomal subunit. Interacts with proteins S7 and S18. Binds to IF-3.

Its function is as follows. Located on the platform of the 30S subunit, it bridges several disparate RNA helices of the 16S rRNA. Forms part of the Shine-Dalgarno cleft in the 70S ribosome. In Francisella tularensis subsp. tularensis (strain FSC 198), this protein is Small ribosomal subunit protein uS11.